A 323-amino-acid polypeptide reads, in one-letter code: MIFSTLEHILTHISFSIISIVITIHLLNLLVHDTVGLCDSSEKGMMATFFCITGLLVTRWIYSRHFPLSDLYESLMFLSWSFSIIHMVPYFRNHKNSLSAITAPSAIFTQGFATSGLLTEMHQSAILVPALQSQWLMMHVSMMLLGYASLLCGSLLSVALLVITFRKTLGIPGKNNHFLIGSFPFGEIRYFNEKRKRSVLKKTSFFSFRNYHRYQLTQRLDHCSYRIISLGFTFSTIGILSGAVWANEAWGSYWNWDPKETWAFITWTIFAIYLHTRTNQRFQDVGPAIVASMGFLIIWICYFGVNLLGIGLHSYGSFALTSN.

8 helical membrane passes run 9–29 (ILTH…LLNL), 45–62 (MMAT…RWIY), 71–91 (LYES…VPYF), 98–118 (LSAI…SGLL), 143–163 (MLLG…LLVI), 227–247 (IISL…VWAN), 261–275 (TWAF…IYLH), and 285–305 (VGPA…YFGV).

Belongs to the CcmF/CycK/Ccl1/NrfE/CcsA family. In terms of assembly, may interact with Ccs1.

It localises to the plastid. The protein localises to the chloroplast thylakoid membrane. Functionally, required during biogenesis of c-type cytochromes (cytochrome c6 and cytochrome f) at the step of heme attachment. The chain is Cytochrome c biogenesis protein CcsA from Calycanthus floridus var. glaucus (Eastern sweetshrub).